A 139-amino-acid polypeptide reads, in one-letter code: Nuclear receptor 2C2-associated protein (139 aa).

Belongs to the NR2C2AP family. In terms of assembly, interacts with NR2C2/TR4. In terms of tissue distribution, expressed in all tissues examined, with highest expression in heart, skeletal muscle and pancreas.

It localises to the nucleus. In terms of biological role, may act as a repressor of NR2C2-mediated transactivation by suppressing the binding between NR2C2/TR4 and the TR4-response element in target genes. The sequence is that of Nuclear receptor 2C2-associated protein (NR2C2AP) from Homo sapiens (Human).